The following is a 394-amino-acid chain: Elongation factor Tu (394 aa).

Positions 10-204 (KPHVNVGTIG…ALDTYIPEPE (195 aa)) constitute a tr-type G domain. Positions 19 to 26 (GHVDHGKT) are G1. Residue 19-26 (GHVDHGKT) coordinates GTP. T26 serves as a coordination point for Mg(2+). The tract at residues 60–64 (GITIN) is G2. The segment at 81–84 (DCPG) is G3. GTP-binding positions include 81–85 (DCPGH) and 136–139 (NKCD). The interval 136-139 (NKCD) is G4. The tract at residues 174-176 (SAL) is G5.

Belongs to the TRAFAC class translation factor GTPase superfamily. Classic translation factor GTPase family. EF-Tu/EF-1A subfamily. Monomer.

Its subcellular location is the cytoplasm. The catalysed reaction is GTP + H2O = GDP + phosphate + H(+). In terms of biological role, GTP hydrolase that promotes the GTP-dependent binding of aminoacyl-tRNA to the A-site of ribosomes during protein biosynthesis. The protein is Elongation factor Tu of Shewanella halifaxensis (strain HAW-EB4).